The following is a 1486-amino-acid chain: Chromosome partition protein MukB (1486 aa).

Residue 34 to 41 (GGNGAGKS) coordinates ATP. Coiled coils occupy residues 326–418 (LEAD…QYNQ), 444–480 (LETF…QAYQ), and 509–603 (RHLA…RAPV). The tract at residues 666–783 (PGGSEDQRLN…EVPLFGRAAR (118 aa)) is flexible hinge. Coiled-coil stretches lie at residues 835-923 (EAEI…AKLE), 977-1115 (EMLS…TAKA), and 1209-1266 (VEAI…QNVS).

Belongs to the SMC family. MukB subfamily. As to quaternary structure, homodimerization via its hinge domain. Binds to DNA via its C-terminal region. Interacts, and probably forms a ternary complex, with MukE and MukF via its C-terminal region. The complex formation is stimulated by calcium or magnesium. Interacts with tubulin-related protein FtsZ.

The protein localises to the cytoplasm. It is found in the nucleoid. In terms of biological role, plays a central role in chromosome condensation, segregation and cell cycle progression. Functions as a homodimer, which is essential for chromosome partition. Involved in negative DNA supercoiling in vivo, and by this means organize and compact chromosomes. May achieve or facilitate chromosome segregation by condensation DNA from both sides of a centrally located replisome during cell division. The chain is Chromosome partition protein MukB from Escherichia fergusonii (strain ATCC 35469 / DSM 13698 / CCUG 18766 / IAM 14443 / JCM 21226 / LMG 7866 / NBRC 102419 / NCTC 12128 / CDC 0568-73).